Reading from the N-terminus, the 133-residue chain is Protein NrdI (133 aa).

The protein belongs to the NrdI family.

Functionally, probably involved in ribonucleotide reductase function. The protein is Protein NrdI of Cronobacter sakazakii (strain ATCC BAA-894) (Enterobacter sakazakii).